A 252-amino-acid chain; its full sequence is Trans-aconitate 2-methyltransferase (252 aa).

This sequence belongs to the methyltransferase superfamily. Tam family.

It is found in the cytoplasm. It catalyses the reaction trans-aconitate + S-adenosyl-L-methionine = (E)-3-(methoxycarbonyl)pent-2-enedioate + S-adenosyl-L-homocysteine. Catalyzes the S-adenosylmethionine monomethyl esterification of trans-aconitate. This chain is Trans-aconitate 2-methyltransferase, found in Escherichia coli O139:H28 (strain E24377A / ETEC).